The primary structure comprises 342 residues: Pre-mRNA-splicing factor 18 (342 aa).

This sequence belongs to the PRP18 family. As to quaternary structure, interacts with the spliceosome. Part of a complex containing U4/U6 snRNPs.

It is found in the nucleus speckle. Participates in the second step of pre-mRNA splicing. The chain is Pre-mRNA-splicing factor 18 (prpf18) from Danio rerio (Zebrafish).